The following is a 652-amino-acid chain: MKDRMSELVSLLNRYAHEYYTKDAPSVSDSEYDQLYRELVSLEEQYPNEILPESPTHRVGGKVLDGFEKYQHQYPLYSLQDAFSRAELVAFDERVRKEFPDASYLCELKIDGLSISLAYENGILVAGATRGDGSIGENITENLKRVKDIPLTLPEPLTITVRGECYMPKASFDAVNQLRQENGEAEFANPRNAAAGTLRQLDTSVVAKRNLATFLYQEASPTSEATQEDVLEKLSQLGFSVNEKRVLASTIDQVWDFIEKVGQERDKLPYEIDGIVIKVNHLAAQEELGFTVKAPKWAIAYKFPAEEKEAQLLSVDWTVGRTGVVTPTANLTPVQLAGTTVSRATLHNVDYIREKDIRKDDTVIVYKAGDIIPAVLRVVEGKRVSDEHLDVPSKCPSCQSDLLHFEDEVALRCINPLCPAQIMEGLAHFASRDAMNISGLGPAVVEKLFAKDLVRDVAGIYRLNIEDLLQLENFKEKSANKLYNAIQASKSNSAEKLLFGLGIRHVGSKASRILLEKFHDIPSLAQAEQEEIVSIDSLGMVIAKSLHSYFAQEGTQILLKELEEAGVNLAYLGEKAAADAVLSGKTVVLTGKLETLTRTQAKEKLLRLGANVAGSVSKKTDLVIAGADAGSKLAKAQELGIEIQDEAWLEQL.

Residues 29-33, 78-79, and Glu107 each bind NAD(+); these read DSEYD and SL. Lys109 (N6-AMP-lysine intermediate) is an active-site residue. NAD(+) contacts are provided by Arg130, Glu164, Lys278, and Lys302. 4 residues coordinate Zn(2+): Cys395, Cys398, Cys413, and Cys418. The BRCT domain maps to 577 to 652; the sequence is AADAVLSGKT…IQDEAWLEQL (76 aa).

The protein belongs to the NAD-dependent DNA ligase family. LigA subfamily. Mg(2+) is required as a cofactor. Mn(2+) serves as cofactor.

The enzyme catalyses NAD(+) + (deoxyribonucleotide)n-3'-hydroxyl + 5'-phospho-(deoxyribonucleotide)m = (deoxyribonucleotide)n+m + AMP + beta-nicotinamide D-nucleotide.. Functionally, DNA ligase that catalyzes the formation of phosphodiester linkages between 5'-phosphoryl and 3'-hydroxyl groups in double-stranded DNA using NAD as a coenzyme and as the energy source for the reaction. It is essential for DNA replication and repair of damaged DNA. This Streptococcus gordonii (strain Challis / ATCC 35105 / BCRC 15272 / CH1 / DL1 / V288) protein is DNA ligase.